The following is a 755-amino-acid chain: 1,4-alpha-glucan branching enzyme GlgB (755 aa).

The Nucleophile role is filled by Asp435. Glu488 (proton donor) is an active-site residue.

The protein belongs to the glycosyl hydrolase 13 family. GlgB subfamily. As to quaternary structure, monomer.

It carries out the reaction Transfers a segment of a (1-&gt;4)-alpha-D-glucan chain to a primary hydroxy group in a similar glucan chain.. Its pathway is glycan biosynthesis; glycogen biosynthesis. Its function is as follows. Catalyzes the formation of the alpha-1,6-glucosidic linkages in glycogen by scission of a 1,4-alpha-linked oligosaccharide from growing alpha-1,4-glucan chains and the subsequent attachment of the oligosaccharide to the alpha-1,6 position. This is 1,4-alpha-glucan branching enzyme GlgB from Vibrio parahaemolyticus serotype O3:K6 (strain RIMD 2210633).